The following is a 120-amino-acid chain: Large ribosomal subunit protein uL18 (120 aa).

It belongs to the universal ribosomal protein uL18 family. Part of the 50S ribosomal subunit; part of the 5S rRNA/L5/L18/L25 subcomplex. Contacts the 5S and 23S rRNAs.

This is one of the proteins that bind and probably mediate the attachment of the 5S RNA into the large ribosomal subunit, where it forms part of the central protuberance. The polypeptide is Large ribosomal subunit protein uL18 (Bartonella quintana (strain Toulouse) (Rochalimaea quintana)).